A 99-amino-acid chain; its full sequence is MDDLKIILEFSAGAELLFGNIKRRQLFLDGHKKWTIANLLKWMHANILTERPELFLQGDTVRPGILVLINDTDWELLGELDYELQANDNVLFISTLHGG.

Gly99 carries the post-translational modification 1-thioglycine. Residue Gly99 forms a Glycyl lysine isopeptide (Gly-Lys) (interchain with K-? in acceptor proteins) linkage.

The protein belongs to the URM1 family. Interacts with cer. In terms of processing, C-terminal thiocarboxylation occurs in 2 steps, it is first acyl-adenylated (-COAMP) via the hesA/moeB/thiF part of the MOCS3 homolog, then thiocarboxylated (-COSH) via the rhodanese domain of the MOCS3 homolog.

It localises to the cytoplasm. It functions in the pathway tRNA modification; 5-methoxycarbonylmethyl-2-thiouridine-tRNA biosynthesis. In terms of biological role, acts as a sulfur carrier required for 2-thiolation of mcm(5)S(2)U at tRNA wobble positions of cytosolic tRNA(Lys), tRNA(Glu) and tRNA(Gln). Serves as sulfur donor in tRNA 2-thiolation reaction by being thiocarboxylated (-COSH) at its C-terminus by MOCS3. The sulfur is then transferred to tRNA to form 2-thiolation of mcm(5)S(2)U. Also acts as a ubiquitin-like protein (UBL) that is covalently conjugated via an isopeptide bond to lysine residues of target proteins such as Prx2/Jafrac1, Ciao1, Eip71CD and GILT1. The thiocarboxylated form serves as substrate for conjugation and oxidative stress specifically induces the formation of UBL-protein conjugates. This Drosophila persimilis (Fruit fly) protein is Ubiquitin-related modifier 1 homolog.